The following is a 391-amino-acid chain: Dual-specificity RNA methyltransferase RlmN (391 aa).

The interval 1-20 is disordered; sequence MTSVVADSLTETKTDSQKPI. Basic and acidic residues predominate over residues 10–20; it reads TETKTDSQKPI. Glutamate 120 serves as the catalytic Proton acceptor. The Radical SAM core domain maps to 126–366; sequence DADRGTLCIS…APVRRTRGQD (241 aa). Cysteine 133 and cysteine 371 form a disulfide bridge. [4Fe-4S] cluster is bound by residues cysteine 140, cysteine 144, and cysteine 147. Residues 195–196, serine 227, 249–251, and asparagine 328 contribute to the S-adenosyl-L-methionine site; these read GE and SLH. Residue cysteine 371 is the S-methylcysteine intermediate of the active site.

This sequence belongs to the radical SAM superfamily. RlmN family. [4Fe-4S] cluster is required as a cofactor.

It localises to the cytoplasm. The enzyme catalyses adenosine(2503) in 23S rRNA + 2 reduced [2Fe-2S]-[ferredoxin] + 2 S-adenosyl-L-methionine = 2-methyladenosine(2503) in 23S rRNA + 5'-deoxyadenosine + L-methionine + 2 oxidized [2Fe-2S]-[ferredoxin] + S-adenosyl-L-homocysteine. The catalysed reaction is adenosine(37) in tRNA + 2 reduced [2Fe-2S]-[ferredoxin] + 2 S-adenosyl-L-methionine = 2-methyladenosine(37) in tRNA + 5'-deoxyadenosine + L-methionine + 2 oxidized [2Fe-2S]-[ferredoxin] + S-adenosyl-L-homocysteine. Specifically methylates position 2 of adenine 2503 in 23S rRNA and position 2 of adenine 37 in tRNAs. m2A2503 modification seems to play a crucial role in the proofreading step occurring at the peptidyl transferase center and thus would serve to optimize ribosomal fidelity. The protein is Dual-specificity RNA methyltransferase RlmN of Zymomonas mobilis subsp. mobilis (strain ATCC 31821 / ZM4 / CP4).